We begin with the raw amino-acid sequence, 499 residues long: MAALTMQFEGEKKNVSEVADVTLKQEDEQQERRSYSTPFREERDTFGPIQVPSDKLWGAQTQRSLQNFEIGGDRERMPEPIVRAFGVLKKCAAKVNMEYGLDPMIGEAIMEAAQEVAEGKLNDHFPLVVWQTGSGTQSNMNANEVIANRAAEILGHKRGEKIVHPNDHVNRSQSSNDTFPTVMHIAAATEITSRLIPSLKNLHSSLESKSFEFKDIVKIGRTHTQDATPLTLGQEFGGYATQVEYGLNRVACTLPRIYQLAQGGTAVGTGLNTKKGFDVKIAAAVAEETNLPFVTAENKFEALAAHDACVETSGSLNTIATSLMKIANDIRFLGSGPRCGLGELSLPENEPGSSIMPGKVNPTQCEALTMVCAQVMGNHVAVTIGGSNGHFELNVFKPVIASALLHSIRLIADASASFEKNCVRGIEANRERISKLLHESLMLVTSLNPKIGYDNAAAVAKRAHKEGCTLKHAAMKLGVLTSEEFDTLVVPEKMIGPSD.

Residues Ala19 to Val51 form a disordered region. Residues Leu23–Thr45 show a composition bias toward basic and acidic residues. Substrate-binding positions include Ser134 to Thr136, His164 to Asp167, Ser174 to Asn176, and Thr222. The Proton donor/acceptor role is filled by His223. Residue Ser353 is part of the active site. Residues Ser354 and Lys359–Asn361 each bind substrate.

The protein belongs to the class-II fumarase/aspartase family. Fumarase subfamily. Homotetramer.

The protein localises to the cytoplasm. Its subcellular location is the cytosol. The catalysed reaction is (S)-malate = fumarate + H2O. With respect to regulation, fumarate hydratase activity (fumarate to L-malate) is strongly inhibited by phosphoenolpyruvate, citrate, oxaloacetate, ATP and ADP. Malate dehydratase activity (malate to fumarate) is activated by oxaloacetate, Asn and Gln. Malate dehydratase activity (malate to fumarate) is inhibited by citrate, succinate, ADP and ATP. In terms of biological role, cytosolic fumarate hydratase that catalyzes the reversible stereospecific interconversion of fumarate to L-malate. Catalyzes the dehydration of L-malate to fumarate in the cytosol: required for the massive fumarate accumulation during the day in plants grown under high nitrogen. Also required for acclimation of photosynthesis to cold: acts by mediating accumulation of fumarate at low temperature, leading to reduce accumulation of phosphorylated sugars. In Arabidopsis thaliana (Mouse-ear cress), this protein is Fumarate hydratase 2.